The following is a 438-amino-acid chain: 23S rRNA (uracil(1939)-C(5))-methyltransferase RlmD (438 aa).

In terms of domain architecture, TRAM spans 10-68 (KTKNVQTITADILDLDYQGLGVAKINGKTWFIENALPHEKVECRILEDKRQYGHAIVKK). The [4Fe-4S] cluster site is built by C81, C87, C90, and C168. Positions 271, 300, 305, 321, 348, and 369 each coordinate S-adenosyl-L-methionine. Catalysis depends on C395, which acts as the Nucleophile.

It belongs to the class I-like SAM-binding methyltransferase superfamily. RNA M5U methyltransferase family. RlmD subfamily.

It carries out the reaction uridine(1939) in 23S rRNA + S-adenosyl-L-methionine = 5-methyluridine(1939) in 23S rRNA + S-adenosyl-L-homocysteine + H(+). Functionally, catalyzes the formation of 5-methyl-uridine at position 1939 (m5U1939) in 23S rRNA. The protein is 23S rRNA (uracil(1939)-C(5))-methyltransferase RlmD of Haemophilus influenzae (strain ATCC 51907 / DSM 11121 / KW20 / Rd).